A 269-amino-acid polypeptide reads, in one-letter code: 4-hydroxy-tetrahydrodipicolinate reductase (269 aa).

An NAD(+)-binding site is contributed by 9–14; that stretch reads GVAGRM. Position 36 (R36) interacts with NADP(+). Residues 99–101 and 123–126 contribute to the NAD(+) site; these read GTT and APNM. H156 acts as the Proton donor/acceptor in catalysis. H157 serves as a coordination point for (S)-2,3,4,5-tetrahydrodipicolinate. The active-site Proton donor is the K160. 166 to 167 is a binding site for (S)-2,3,4,5-tetrahydrodipicolinate; sequence GT.

This sequence belongs to the DapB family.

It is found in the cytoplasm. It carries out the reaction (S)-2,3,4,5-tetrahydrodipicolinate + NAD(+) + H2O = (2S,4S)-4-hydroxy-2,3,4,5-tetrahydrodipicolinate + NADH + H(+). It catalyses the reaction (S)-2,3,4,5-tetrahydrodipicolinate + NADP(+) + H2O = (2S,4S)-4-hydroxy-2,3,4,5-tetrahydrodipicolinate + NADPH + H(+). It functions in the pathway amino-acid biosynthesis; L-lysine biosynthesis via DAP pathway; (S)-tetrahydrodipicolinate from L-aspartate: step 4/4. In terms of biological role, catalyzes the conversion of 4-hydroxy-tetrahydrodipicolinate (HTPA) to tetrahydrodipicolinate. In Methylococcus capsulatus (strain ATCC 33009 / NCIMB 11132 / Bath), this protein is 4-hydroxy-tetrahydrodipicolinate reductase.